The following is a 310-amino-acid chain: tRNA pseudouridine synthase B (310 aa).

Catalysis depends on aspartate 37, which acts as the Nucleophile.

Belongs to the pseudouridine synthase TruB family. Type 1 subfamily.

The catalysed reaction is uridine(55) in tRNA = pseudouridine(55) in tRNA. In terms of biological role, responsible for synthesis of pseudouridine from uracil-55 in the psi GC loop of transfer RNAs. This chain is tRNA pseudouridine synthase B, found in Deinococcus deserti (strain DSM 17065 / CIP 109153 / LMG 22923 / VCD115).